A 556-amino-acid chain; its full sequence is General transcription factor IIF subunit 1 (556 aa).

Disordered regions lie at residues 82 to 128 (TMTS…PAAA) and 226 to 499 (SRLQ…PFTE). The span at 84–128 (TSAPNGTNSTGTTPNTTTTTTTTTTTTTTTTTAAGTPGAPNPAAA) shows a compositional bias: low complexity. Residues 245–275 (SGKKSIEELEEAEHRNRNEDPNRYKTTNEEK) show a composition bias toward basic and acidic residues. 2 stretches are compositionally biased toward acidic residues: residues 291–338 (GNGE…DVDL) and 378–394 (GDDEDDDEDDEDPDQDD). Composition is skewed to basic and acidic residues over residues 415–427 (VKKEDDGGKDSKS) and 450–461 (NKSDSSVDNRES). A compositionally biased stretch (low complexity) spans 469–492 (SSPQAVQPNSPSQQQQQQQQNIDP).

The protein belongs to the TFIIF alpha subunit family. Heterodimer of an alpha and a beta subunit.

The protein resides in the nucleus. TFIIF is a general transcription initiation factor that binds to RNA polymerase II and helps to recruit it to the initiation complex in collaboration with TFIIB. It promotes transcription elongation. This is General transcription factor IIF subunit 1 (gtf2f1) from Dictyostelium discoideum (Social amoeba).